We begin with the raw amino-acid sequence, 118 residues long: Small ribosomal subunit protein uS13 (118 aa).

Positions 92–118 are disordered; sequence RRNLPVRGQNTKNNARTRKGPTRPLKR. Over residues 106–118 the composition is skewed to basic residues; that stretch reads ARTRKGPTRPLKR.

The protein belongs to the universal ribosomal protein uS13 family. In terms of assembly, part of the 30S ribosomal subunit. Forms a loose heterodimer with protein S19. Forms two bridges to the 50S subunit in the 70S ribosome.

Its function is as follows. Located at the top of the head of the 30S subunit, it contacts several helices of the 16S rRNA. In the 70S ribosome it contacts the 23S rRNA (bridge B1a) and protein L5 of the 50S subunit (bridge B1b), connecting the 2 subunits; these bridges are implicated in subunit movement. Contacts the tRNAs in the A and P-sites. This is Small ribosomal subunit protein uS13 from Psychrobacter arcticus (strain DSM 17307 / VKM B-2377 / 273-4).